A 472-amino-acid chain; its full sequence is H(+)/Cl(-) exchange transporter ClcA (472 aa).

Topologically, residues 1-32 are cytoplasmic; sequence MKAETPSFEAHQFVRVRRGDAVRRLIQRDKTP. Residues 33–69 traverse the membrane as a helical segment; it reads LAVLLMAAVVGTLAGLVGVAFEKSVNWVQNQRIGALA. Residues 70 to 76 are Periplasmic-facing; it reads QVADHWY. A helical membrane pass occupies residues 77–100; it reads LVWPLAFILSALLAMVGYFLVRRF. Positions 106-110 match the Selectivity filter part_1 motif; that stretch reads GSGIP. Chloride is bound at residue serine 107. Positions 109-116 form an intramembrane region, helical; that stretch reads IPEIEGAL. The Cytoplasmic portion of the chain corresponds to 117–123; that stretch reads EELRPVR. 2 helical membrane-spanning segments follow: residues 124–141 and 148–166; these read WWRV…TLGA and EGPM…LDIF. Positions 146 to 150 match the Selectivity filter part_2 motif; it reads GREGP. Topologically, residues 167-176 are cytoplasmic; the sequence is RMRSPEARHT. Intramembrane regions (helical) lie at residues 177–189 and 193–201; these read LLAT…LSAA and PLAGILFII. At 202–214 the chain is on the cytoplasmic side; that stretch reads EEMRPQFRYNLIS. A helical membrane pass occupies residues 215–232; that stretch reads IKAVFTGVIMSSIVFRIF. The Periplasmic segment spans residues 233–252; the sequence is NGEAAIIEVGKLSNAPVNTL. A helical membrane pass occupies residues 253-281; sequence WLYLVLGMLFGCFGPLFNFLVLRTQDIFQ. At 282–287 the chain is on the cytoplasmic side; it reads RIHGGN. The chain crosses the membrane as a helical span at residues 288-309; the sequence is IKTWVLMGGVIGGICGLLGLMQ. Residues 310 to 329 are Periplasmic-facing; it reads PSAVGGGFNLIPIAAAGNFS. 2 consecutive transmembrane segments (helical) span residues 330 to 349 and 355 to 376; these read VGLL…ICFS and GIFA…MAAI. The short motif at 355 to 359 is the Selectivity filter part_3 element; sequence GIFAP. The chloride site is built by isoleucine 356 and phenylalanine 357. The Periplasmic segment spans residues 377–386; that stretch reads PLFPAYHLDA. The helical intramembrane region spans 387-401; it reads GTFAIAGMGALLAAS. An intramembrane region (note=Loop between two helices) is located at residues 402 to 404; it reads VRA. The helical intramembrane region spans 405-416; it reads PLTGIVLVLEMT. Positions 417–421 form an intramembrane region, note=Loop between two helices; sequence DNYQL. A helical transmembrane segment spans residues 422–438; the sequence is ILPMIITCLGATLLAQF. Topologically, residues 439-472 are cytoplasmic; it reads LGGKPLYSTILQRTLAKQEAEQAAKAQQAPRENT. Tyrosine 445 lines the chloride pocket.

This sequence belongs to the chloride channel (TC 2.A.49) family. ClcA subfamily. As to quaternary structure, homodimer.

The protein resides in the cell inner membrane. The catalysed reaction is 2 chloride(in) + H(+)(out) = 2 chloride(out) + H(+)(in). In terms of biological role, proton-coupled chloride transporter. Functions as antiport system and exchanges two chloride ions for 1 proton. Probably acts as an electrical shunt for an outwardly-directed proton pump that is linked to amino acid decarboxylation, as part of the extreme acid resistance (XAR) response. The polypeptide is H(+)/Cl(-) exchange transporter ClcA (Klebsiella pneumoniae (strain 342)).